The following is a 375-amino-acid chain: Alcohol dehydrogenase 1 (375 aa).

Ser-2 bears the N-acetylserine mark. Positions 47, 68, 98, 101, 104, 112, and 175 each coordinate Zn(2+). Residues 200–205 (WSGRVG), Asp-224, and Lys-229 each bind NAD(+). An N6-succinyllysine modification is found at Lys-234. An NAD(+)-binding site is contributed by 293-295 (VGV). Residue Lys-340 is modified to N6-succinyllysine. NAD(+) is bound at residue Arg-370.

The protein belongs to the zinc-containing alcohol dehydrogenase family. Class-I subfamily. Homodimer. Requires Zn(2+) as cofactor.

Its subcellular location is the cytoplasm. The catalysed reaction is a primary alcohol + NAD(+) = an aldehyde + NADH + H(+). It catalyses the reaction a secondary alcohol + NAD(+) = a ketone + NADH + H(+). In Geomys knoxjonesi (Jones' pocket gopher), this protein is Alcohol dehydrogenase 1 (ADH1).